The following is a 526-amino-acid chain: Ribonuclease Y (526 aa).

Residues 10-30 (ITFILLIVVGALGGALVGYFI) form a helical membrane-spanning segment. The KH domain occupies 216–279 (TVTVVEIPNE…EVAKRALTIL (64 aa)). The HD domain maps to 342–435 (VLKHSIEVAF…VAAADALSAA (94 aa)).

It belongs to the RNase Y family.

It is found in the cell membrane. In terms of biological role, endoribonuclease that initiates mRNA decay. In Acholeplasma laidlawii (strain PG-8A), this protein is Ribonuclease Y.